The chain runs to 135 residues: VHWTAEEKALVNVVWSKTDHQAVVANALGRLFVVYPWTKTYFTKFNGKAGDSTVQTHAGKVVSALTLAYNHIDDVKPHFKHYEGFHVDPENFRLLANCLNVELGHTLHKEFTPELHAAWNKFSNVVVDALSKAYQ.

The region spanning 2 to 135 (HWTAEEKALV…VVDALSKAYQ (134 aa)) is the Globin domain. Residues His57 and His81 each coordinate heme b.

It belongs to the globin family. Hb 3 is a heterotetramer of two alpha and two beta-3 chains. As to expression, red blood cells (at protein level).

Functionally, involved in oxygen transport from gills to the various peripheral tissues. The sequence is that of Hemoglobin subunit beta-3 from Somniosus microcephalus (Greenland sleeper shark).